We begin with the raw amino-acid sequence, 259 residues long: Putative protein phosphatase (259 aa).

The 248-residue stretch at 8–255 (LFASLSKKGP…DNITLNLINL (248 aa)) folds into the PPM-type phosphatase domain.

It catalyses the reaction O-phospho-L-seryl-[protein] + H2O = L-seryl-[protein] + phosphate. The catalysed reaction is O-phospho-L-threonyl-[protein] + H2O = L-threonyl-[protein] + phosphate. The protein is Putative protein phosphatase of Mycoplasma pneumoniae (strain ATCC 29342 / M129 / Subtype 1) (Mycoplasmoides pneumoniae).